Consider the following 718-residue polypeptide: Auxin response factor 2 (718 aa).

The disordered stretch occupies residues 1 to 24 (MVGIDLNTVEEEEDEEEGGATGTV). Residues 8–18 (TVEEEEDEEEG) show a composition bias toward acidic residues. Positions 147-249 (FCKTLTASDT…ELRLGVRRAA (103 aa)) form a DNA-binding region, TF-B3.

This sequence belongs to the ARF family. Homo and heterodimers. As to expression, expressed in roots, culms, leaves and young panicles.

Its subcellular location is the nucleus. In terms of biological role, auxin response factors (ARFs) are transcriptional factors that bind specifically to the DNA sequence 5'-TGTCTC-3' found in the auxin-responsive promoter elements (AuxREs). The chain is Auxin response factor 2 (ARF2) from Oryza sativa subsp. japonica (Rice).